Here is a 488-residue protein sequence, read N- to C-terminus: Mannosylglycerate hydrolase MGH2 (488 aa).

Substrate is bound by residues Tyr-94, 98-101, Tyr-146, Gln-167, and Gly-227; that span reads WNWD. Asp-229 serves as the catalytic Proton donor. Substrate-binding positions include Arg-262 and 415 to 416; that span reads YW. Glu-459 acts as the Proton acceptor in catalysis.

The protein belongs to the glycosyl hydrolase 63 family.

The enzyme catalyses (2R)-2-O-(alpha-D-mannosyl)-glycerate + H2O = D-mannose + (R)-glycerate. It catalyses the reaction (2R)-2-O-(alpha-D-glucopyranosyl)-glycerate + H2O = (R)-glycerate + D-glucose. Activity is not dependent on divalent cations, but it is enhanced by Mn(2+). Functionally, catalyzes the hydrolysis of alpha-D-mannosyl-glycerate (MG) to D-glycerate and D-mannose. Can also hydrolyze alpha-D-glucopyranosyl-glycerate (GG)with lower efficiency. In Selaginella moellendorffii (Spikemoss), this protein is Mannosylglycerate hydrolase MGH2.